Here is a 487-residue protein sequence, read N- to C-terminus: Protein nucleotidyltransferase YdiU (487 aa).

Residues glycine 92, arginine 95, lysine 106, aspartate 118, glycine 119, arginine 169, and arginine 176 each coordinate ATP. Residue aspartate 253 is the Proton acceptor of the active site. Asparagine 254 and aspartate 263 together coordinate Mg(2+). Aspartate 263 contributes to the ATP binding site.

The protein belongs to the SELO family. It depends on Mg(2+) as a cofactor. Mn(2+) is required as a cofactor.

The enzyme catalyses L-seryl-[protein] + ATP = 3-O-(5'-adenylyl)-L-seryl-[protein] + diphosphate. It catalyses the reaction L-threonyl-[protein] + ATP = 3-O-(5'-adenylyl)-L-threonyl-[protein] + diphosphate. The catalysed reaction is L-tyrosyl-[protein] + ATP = O-(5'-adenylyl)-L-tyrosyl-[protein] + diphosphate. It carries out the reaction L-histidyl-[protein] + UTP = N(tele)-(5'-uridylyl)-L-histidyl-[protein] + diphosphate. The enzyme catalyses L-seryl-[protein] + UTP = O-(5'-uridylyl)-L-seryl-[protein] + diphosphate. It catalyses the reaction L-tyrosyl-[protein] + UTP = O-(5'-uridylyl)-L-tyrosyl-[protein] + diphosphate. Its function is as follows. Nucleotidyltransferase involved in the post-translational modification of proteins. It can catalyze the addition of adenosine monophosphate (AMP) or uridine monophosphate (UMP) to a protein, resulting in modifications known as AMPylation and UMPylation. The chain is Protein nucleotidyltransferase YdiU from Bordetella pertussis (strain Tohama I / ATCC BAA-589 / NCTC 13251).